The sequence spans 172 residues: MKLPNILLTGTPGVGKTTLGKELASRSGLKYVNVGDLAREGQLYDGYDEEYGCPILDEDRVVDELEHQMQEGGVIVDYHGCDFFPERWFHIVFVLRTDNGVLYKRLETRGYNEKKLQDNIQCEIFQVLYEEAIASYKEEIVHQLPSNEPEQLEDNINQISKWIEQWVKDHNP.

The ATP site is built by Gly-13, Gly-15, Lys-16, Thr-17, and Thr-18. Positions 33–56 are NMPbind; it reads NVGDLAREGQLYDGYDEEYGCPIL. Residues 108–118 are LID; that stretch reads TRGYNEKKLQD. Arg-109 provides a ligand contact to ATP.

The protein belongs to the adenylate kinase family. AK6 subfamily. As to quaternary structure, monomer and homodimer. Interacts with small ribosomal subunit protein uS11. Not a structural component of 43S pre-ribosomes, but transiently interacts with them by binding to uS11. Interacts with COIL (via C-terminus).

It localises to the cytoplasm. The protein localises to the nucleus. Its subcellular location is the nucleoplasm. It is found in the cajal body. The catalysed reaction is AMP + ATP = 2 ADP. It catalyses the reaction ATP + H2O = ADP + phosphate + H(+). In terms of biological role, broad-specificity nucleoside monophosphate (NMP) kinase that catalyzes the reversible transfer of the terminal phosphate group between nucleoside triphosphates and monophosphates. Also has ATPase activity. Involved in the late cytoplasmic maturation steps of the 40S ribosomal particles, specifically 18S rRNA maturation. While NMP activity is not required for ribosome maturation, ATPase activity is. Associates transiently with small ribosomal subunit protein uS11. ATP hydrolysis breaks the interaction with uS11. May temporarily remove uS11 from the ribosome to enable a conformational change of the ribosomal RNA that is needed for the final maturation step of the small ribosomal subunit. Its NMP activity may have a role in nuclear energy homeostasis. May be involved in regulation of Cajal body (CB) formation. This Mus musculus (Mouse) protein is Adenylate kinase isoenzyme 6.